Consider the following 477-residue polypeptide: Bifunctional protein HldE (477 aa).

Residues 1–318 (MKVTLPEFER…ENAVRGRADT (318 aa)) form a ribokinase region. K179 carries the post-translational modification N6-acetyllysine. 195 to 198 (NLSE) is an ATP binding site. The active site involves D264. Residues 344–477 (MTNGVFDILH…IKKIQLDKKG (134 aa)) are cytidylyltransferase.

This sequence in the N-terminal section; belongs to the carbohydrate kinase PfkB family. It in the C-terminal section; belongs to the cytidylyltransferase family. As to quaternary structure, homodimer.

The catalysed reaction is D-glycero-beta-D-manno-heptose 7-phosphate + ATP = D-glycero-beta-D-manno-heptose 1,7-bisphosphate + ADP + H(+). It catalyses the reaction D-glycero-beta-D-manno-heptose 1-phosphate + ATP + H(+) = ADP-D-glycero-beta-D-manno-heptose + diphosphate. It participates in nucleotide-sugar biosynthesis; ADP-L-glycero-beta-D-manno-heptose biosynthesis; ADP-L-glycero-beta-D-manno-heptose from D-glycero-beta-D-manno-heptose 7-phosphate: step 1/4. Its pathway is nucleotide-sugar biosynthesis; ADP-L-glycero-beta-D-manno-heptose biosynthesis; ADP-L-glycero-beta-D-manno-heptose from D-glycero-beta-D-manno-heptose 7-phosphate: step 3/4. In terms of biological role, catalyzes the phosphorylation of D-glycero-D-manno-heptose 7-phosphate at the C-1 position to selectively form D-glycero-beta-D-manno-heptose-1,7-bisphosphate. Its function is as follows. Catalyzes the ADP transfer from ATP to D-glycero-beta-D-manno-heptose 1-phosphate, yielding ADP-D-glycero-beta-D-manno-heptose. The sequence is that of Bifunctional protein HldE from Escherichia coli O81 (strain ED1a).